The chain runs to 177 residues: Large ribosomal subunit protein uL6 (177 aa).

Belongs to the universal ribosomal protein uL6 family. Part of the 50S ribosomal subunit.

In terms of biological role, this protein binds to the 23S rRNA, and is important in its secondary structure. It is located near the subunit interface in the base of the L7/L12 stalk, and near the tRNA binding site of the peptidyltransferase center. In Paracoccus denitrificans (strain Pd 1222), this protein is Large ribosomal subunit protein uL6.